Reading from the N-terminus, the 335-residue chain is Probable phosphoglycerate mutase ARB_03491 (335 aa).

An N-terminal signal peptide occupies residues 1–24 (MAGRILLGLTLLATSLPLLAMGDA). Catalysis depends on His108, which acts as the Tele-phosphohistidine intermediate. Glu211 acts as the Proton donor/acceptor in catalysis.

This sequence belongs to the phosphoglycerate mutase family.

The protein resides in the secreted. In terms of biological role, probable phosphomutase that may have a function related to the manipulation of phosphate groups on carbohydrates. The polypeptide is Probable phosphoglycerate mutase ARB_03491 (Arthroderma benhamiae (strain ATCC MYA-4681 / CBS 112371) (Trichophyton mentagrophytes)).